An 859-amino-acid chain; its full sequence is Bifunctional levopimaradiene synthase, chloroplastic (859 aa).

The transit peptide at 1–52 directs the protein to the chloroplast; sequence MALLSSSLSSHIPTGAHHLTLNAYANTQCIPHFFSTLNAGTSAGKRSSLYLR. Positions 392, 394, 611, 615, 755, and 763 each coordinate Mg(2+). Positions 392–395 match the DXDD motif motif; that stretch reads DIDD. Positions 611–615 match the DDXXD motif motif; that stretch reads DDLYD.

The protein belongs to the terpene synthase family. Tpsd subfamily. It depends on Mg(2+) as a cofactor. Requires Mn(2+) as cofactor.

The protein localises to the plastid. It is found in the chloroplast. It carries out the reaction (+)-copalyl diphosphate = abieta-8(14),12-diene + diphosphate. The enzyme catalyses (+)-copalyl diphosphate = abieta-7,13-diene + diphosphate. It functions in the pathway secondary metabolite biosynthesis; terpenoid biosynthesis. Its pathway is terpene metabolism; oleoresin biosynthesis. Its function is as follows. Terpene synthase (di-TPS) involved in the biosynthesis of diterpene natural products included in conifer oleoresin secretions and volatile emissions; these compounds contribute to biotic and abiotic stress defense against herbivores and pathogens. Catalyzes the conversion of (+)-copalyl diphosphate ((+)-CPP) to isopimaradiene. The chain is Bifunctional levopimaradiene synthase, chloroplastic from Picea sitchensis (Sitka spruce).